The chain runs to 547 residues: MAAKEIIFSEKARSRMVYGVNLLANAVKATLGPKGRNVVLDKNFGSPIITKDGVSVAKEIELADKFENMGAQMLKEVASKTNDHAGDGTTTATVLAQALIREGCKAVAAGMNPMDLKRGIDKAVIAAVTELKKISKPTSDDKAIAQVATISANSDESIGNIIAEAMKKVGKEGVITIEEGTTLENELDVVEGMQFDRGYSSPYFINNQQSQIVELDNPYILLHDKKISNVRDLLTVLDAVAKESKQLLIVAEEVEGEALATLVVNNIRGIIKVCAVKAPGFGDRRKAMLEDMAVLTGGTVISEEVGLSLEKATTSHLGKAKKVRVSKENTTIIDGMGDNDAINGRVKQIKTQIEETTSDYDREKLQERVAKLAGGVAVIKVGAATEVEMKEKKARVDDALLATRAAVEEGVIPGGGVALIRVITAISNLKGANEDQTHGIQIALRAMEAPLREIVANAGEEPSVILNKVKEGKGNFGYNAATGEFGDMVNFGILDPTKVTRSALQNAASIAGLMITTEAMIAEAPKKDEPTPPAAGGGMGGMGGMDF.

ATP-binding positions include threonine 30–proline 33, lysine 51, aspartate 87–threonine 91, glycine 415, asparagine 479–alanine 481, and aspartate 495. Residues lysine 526 to phenylalanine 547 form a disordered region. Residues alanine 535–phenylalanine 547 show a composition bias toward gly residues.

It belongs to the chaperonin (HSP60) family. As to quaternary structure, forms a cylinder of 14 subunits composed of two heptameric rings stacked back-to-back. Interacts with the co-chaperonin GroES.

The protein localises to the cytoplasm. The enzyme catalyses ATP + H2O + a folded polypeptide = ADP + phosphate + an unfolded polypeptide.. Its function is as follows. Together with its co-chaperonin GroES, plays an essential role in assisting protein folding. The GroEL-GroES system forms a nano-cage that allows encapsulation of the non-native substrate proteins and provides a physical environment optimized to promote and accelerate protein folding. The polypeptide is Chaperonin GroEL (Xylella fastidiosa (strain M12)).